Here is a 212-residue protein sequence, read N- to C-terminus: ATP-dependent dethiobiotin synthetase BioD (212 aa).

Position 13 to 18 (13 to 18 (GIGKTV)) interacts with ATP. Residue Thr17 coordinates Mg(2+). Residue Lys33 is part of the active site. Ser37 provides a ligand contact to substrate. Glu100 lines the Mg(2+) pocket. Residues 100–103 (EGAG) and 184–186 (PLL) each bind ATP.

It belongs to the dethiobiotin synthetase family. In terms of assembly, homodimer. Mg(2+) serves as cofactor.

The protein resides in the cytoplasm. It catalyses the reaction (7R,8S)-7,8-diammoniononanoate + CO2 + ATP = (4R,5S)-dethiobiotin + ADP + phosphate + 3 H(+). It functions in the pathway cofactor biosynthesis; biotin biosynthesis; biotin from 7,8-diaminononanoate: step 1/2. Functionally, catalyzes a mechanistically unusual reaction, the ATP-dependent insertion of CO2 between the N7 and N8 nitrogen atoms of 7,8-diaminopelargonic acid (DAPA, also called 7,8-diammoniononanoate) to form a ureido ring. This is ATP-dependent dethiobiotin synthetase BioD from Brucella canis (strain ATCC 23365 / NCTC 10854 / RM-666).